The chain runs to 583 residues: 15-cis-phytoene desaturase, chloroplastic/chromoplastic (583 aa).

The N-terminal 111 residues, Met-1 to Pro-111, are a transit peptide targeting the chloroplast and chromoplast. FAD contacts are provided by residues Gly-118–Gly-134, Glu-141–Ala-142, Lys-149, His-166–Ile-167, and Tyr-172. Substrate is bound at residue Arg-307. The FAD site is built by Ile-349 and Asp-538. Ala-546 lines the substrate pocket. Met-548 contributes to the FAD binding site.

It belongs to the carotenoid/retinoid oxidoreductase family. Homotetramer. The cofactor is FAD.

The protein localises to the plastid. The protein resides in the chloroplast. It is found in the chromoplast. It localises to the membrane. It catalyses the reaction 2 a plastoquinone + 15-cis-phytoene = 9,9',15-tri-cis-zeta-carotene + 2 a plastoquinol. It functions in the pathway carotenoid biosynthesis; lycopene biosynthesis. Its function is as follows. Converts phytoene into zeta-carotene via the intermediary of phytofluene by the symmetrical introduction of two double bonds at the C-11 and C-11' positions of phytoene with a concomitant isomerization of two neighboring double bonds at the C9 and C9' positions from trans to cis. The protein is 15-cis-phytoene desaturase, chloroplastic/chromoplastic (PDS) of Solanum lycopersicum (Tomato).